The following is a 358-amino-acid chain: Heme A synthase (358 aa).

Helical transmembrane passes span I22–A42, I107–K127, I139–I159, A173–F193, F208–G228, F269–V289, A302–R322, and V324–V344. H271 is a binding site for heme. H332 lines the heme pocket.

Belongs to the COX15/CtaA family. Type 2 subfamily. Interacts with CtaB. Heme b is required as a cofactor.

The protein resides in the cell membrane. It catalyses the reaction Fe(II)-heme o + 2 A + H2O = Fe(II)-heme a + 2 AH2. It functions in the pathway porphyrin-containing compound metabolism; heme A biosynthesis; heme A from heme O: step 1/1. Catalyzes the conversion of heme O to heme A by two successive hydroxylations of the methyl group at C8. The first hydroxylation forms heme I, the second hydroxylation results in an unstable dihydroxymethyl group, which spontaneously dehydrates, resulting in the formyl group of heme A. This Bartonella quintana (strain Toulouse) (Rochalimaea quintana) protein is Heme A synthase.